Consider the following 486-residue polypeptide: Nucleolar GTP-binding protein 2 (486 aa).

The disordered stretch occupies residues 1 to 20 (MGTGKKEKSRRIREGDTKDG). A phosphoserine mark is found at S60, S85, and S155. One can recognise a CP-type G domain in the interval 212–373 (WNELYKVIDS…LIDCPGIVPP (162 aa)). GTP contacts are provided by residues 322–329 (GYPNTGKS) and 366–370 (DCPGI).

This sequence belongs to the TRAFAC class YlqF/YawG GTPase family. NOG2 subfamily.

It is found in the nucleus. The protein localises to the nucleolus. GTPase that associates with pre-60S ribosomal subunits in the nucleolus and is required for their nuclear export and maturation. This chain is Nucleolar GTP-binding protein 2 (NOG2), found in Saccharomyces cerevisiae (strain ATCC 204508 / S288c) (Baker's yeast).